A 220-amino-acid polypeptide reads, in one-letter code: Pyridoxine/pyridoxamine 5'-phosphate oxidase (220 aa).

FMN contacts are provided by residues 49 to 54, 68 to 69, K75, and Q97; these read RMVLLK and YT. K54 lines the substrate pocket. Substrate contacts are provided by Y115, R119, and S123. Residues 132-133 and W176 each bind FMN; that span reads QS. Position 182 to 184 (182 to 184) interacts with substrate; sequence RLH. R186 contributes to the FMN binding site.

Belongs to the pyridoxamine 5'-phosphate oxidase family. As to quaternary structure, homodimer. FMN serves as cofactor.

The catalysed reaction is pyridoxamine 5'-phosphate + O2 + H2O = pyridoxal 5'-phosphate + H2O2 + NH4(+). It carries out the reaction pyridoxine 5'-phosphate + O2 = pyridoxal 5'-phosphate + H2O2. It functions in the pathway cofactor metabolism; pyridoxal 5'-phosphate salvage; pyridoxal 5'-phosphate from pyridoxamine 5'-phosphate: step 1/1. It participates in cofactor metabolism; pyridoxal 5'-phosphate salvage; pyridoxal 5'-phosphate from pyridoxine 5'-phosphate: step 1/1. Its function is as follows. Catalyzes the oxidation of either pyridoxine 5'-phosphate (PNP) or pyridoxamine 5'-phosphate (PMP) into pyridoxal 5'-phosphate (PLP). The polypeptide is Pyridoxine/pyridoxamine 5'-phosphate oxidase (Paracoccus denitrificans (strain Pd 1222)).